Here is a 128-residue protein sequence, read N- to C-terminus: Ribonuclease pancreatic (128 aa).

Residues 1 to 20 (KETAAMKFQRQHMDSGSSLS) form a disordered region. Positions 7 and 10 each coordinate substrate. H12 acts as the Proton acceptor in catalysis. Cystine bridges form between C26–C84, C40–C95, C58–C110, and C65–C72. N-linked (GlcNAc...) asparagine glycosylation is present at N34. Substrate is bound by residues 41 to 45 (KPVNT), K66, and R85. The Proton donor role is filled by H119.

Belongs to the pancreatic ribonuclease family. Monomer. Interacts with and forms tight 1:1 complexes with RNH1. Dimerization of two such complexes may occur. Interaction with RNH1 inhibits this protein. In terms of tissue distribution, pancreas.

The protein resides in the secreted. The catalysed reaction is an [RNA] containing cytidine + H2O = an [RNA]-3'-cytidine-3'-phosphate + a 5'-hydroxy-ribonucleotide-3'-[RNA].. It carries out the reaction an [RNA] containing uridine + H2O = an [RNA]-3'-uridine-3'-phosphate + a 5'-hydroxy-ribonucleotide-3'-[RNA].. Endonuclease that catalyzes the cleavage of RNA on the 3' side of pyrimidine nucleotides. Acts on single-stranded and double-stranded RNA. The chain is Ribonuclease pancreatic (RNASE1) from Choloepus hoffmanni (Hoffmann's two-fingered sloth).